The chain runs to 212 residues: ATP-dependent Clp protease proteolytic subunit 2 (212 aa).

The tract at residues 1–20 is disordered; the sequence is MSHNTSIASQGMPAMAGPET. The Nucleophile role is filled by serine 107. Histidine 132 is a catalytic residue.

Belongs to the peptidase S14 family. As to quaternary structure, fourteen ClpP subunits assemble into 2 heptameric rings which stack back to back to give a disk-like structure with a central cavity, resembling the structure of eukaryotic proteasomes.

It is found in the cytoplasm. It carries out the reaction Hydrolysis of proteins to small peptides in the presence of ATP and magnesium. alpha-casein is the usual test substrate. In the absence of ATP, only oligopeptides shorter than five residues are hydrolyzed (such as succinyl-Leu-Tyr-|-NHMec, and Leu-Tyr-Leu-|-Tyr-Trp, in which cleavage of the -Tyr-|-Leu- and -Tyr-|-Trp bonds also occurs).. Its function is as follows. Cleaves peptides in various proteins in a process that requires ATP hydrolysis. Has a chymotrypsin-like activity. Plays a major role in the degradation of misfolded proteins. This Cutibacterium acnes (strain DSM 16379 / KPA171202) (Propionibacterium acnes) protein is ATP-dependent Clp protease proteolytic subunit 2.